A 254-amino-acid chain; its full sequence is 3-deoxy-manno-octulosonate cytidylyltransferase (254 aa).

The protein belongs to the KdsB family.

The protein localises to the cytoplasm. The enzyme catalyses 3-deoxy-alpha-D-manno-oct-2-ulosonate + CTP = CMP-3-deoxy-beta-D-manno-octulosonate + diphosphate. Its pathway is nucleotide-sugar biosynthesis; CMP-3-deoxy-D-manno-octulosonate biosynthesis; CMP-3-deoxy-D-manno-octulosonate from 3-deoxy-D-manno-octulosonate and CTP: step 1/1. Functionally, activates KDO (a required 8-carbon sugar) for incorporation into bacterial lipopolysaccharide in Gram-negative bacteria. This chain is 3-deoxy-manno-octulosonate cytidylyltransferase, found in Lawsonia intracellularis (strain PHE/MN1-00).